Here is a 545-residue protein sequence, read N- to C-terminus: Membrane protein insertase YidC (545 aa).

Residues 6-26 (NLLLIALLFVSFMIWQAWQTD) form a helical membrane-spanning segment. Residues 31-54 (PVAQTTQQTSNPATGDAASSAVPA) are disordered. 4 consecutive transmembrane segments (helical) span residues 342–362 (KFIHGFIGNWGFSIIIITFIV), 417–437 (LGGCLPLVIQMPIFLALYYML), 455–475 (LSAQDPYYILPILMGVTMFFI), and 496–516 (PVIFTVFFLWFPSGLVLYYIV).

Belongs to the OXA1/ALB3/YidC family. Type 1 subfamily. Interacts with the Sec translocase complex via SecD. Specifically interacts with transmembrane segments of nascent integral membrane proteins during membrane integration.

It localises to the cell inner membrane. Functionally, required for the insertion and/or proper folding and/or complex formation of integral membrane proteins into the membrane. Involved in integration of membrane proteins that insert both dependently and independently of the Sec translocase complex, as well as at least some lipoproteins. Aids folding of multispanning membrane proteins. The sequence is that of Membrane protein insertase YidC from Serratia proteamaculans (strain 568).